The following is a 381-amino-acid chain: MSRHEGVSCDACLKGNFRGRRYKCLICYDYDLCASCYESGATTTRHTTDHPMQCILTRVDFDLYYGGEAFSVEQPQSFTCPYCGKMGYTETSLQEHVTSEHAETSTEVICPICAALPGGDPNHVTDDFAAHLTLEHRAPRDLDESSGVRHVRRMFHPGRGLGGPRARRSNMHFTSSSTGGLSSSQSSYSPSNREAMDPIAELLSQLSGVRRSAGGQLNSSGPSASQLQQLQMQLQLERQHAQAARQQLETARNATRRTNTSSVTTTITQSTATTNTANTESSQQTIQNSQFLLTRLNDPKMSETERQSMESERADRSLFVQELLLSTLVREESSSSDEDERGEMADFGAMGCVDIMPLDVALENLNLKESNKGNEPPPPPL.

Residue Ser-2 is modified to N-acetylserine. Ser-2 carries the post-translational modification Phosphoserine. The ZZ-type zinc-finger motif lies at 4–60; that stretch reads HEGVSCDACLKGNFRGRRYKCLICYDYDLCASCYESGATTTRHTTDHPMQCILTRVD. Zn(2+) contacts are provided by Cys-9, Cys-12, Cys-24, Cys-27, Cys-33, Cys-36, His-46, and His-50. The C2H2-type zinc-finger motif lies at 78-101; that stretch reads FTCPYCGKMGYTETSLQEHVTSEH. The disordered stretch occupies residues 154-193; that stretch reads MFHPGRGLGGPRARRSNMHFTSSSTGGLSSSQSSYSPSNR. Phosphoserine is present on residues Ser-169, Ser-189, and Ser-212. Low complexity predominate over residues 175–191; the sequence is SSSTGGLSSSQSSYSPS. Residues 224-257 are a coiled coil; the sequence is ASQLQQLQMQLQLERQHAQAARQQLETARNATRR. Residues 250 to 285 are compositionally biased toward low complexity; the sequence is TARNATRRTNTSSVTTTITQSTATTNTANTESSQQT. 2 disordered regions span residues 250–314 and 329–348; these read TARN…SERA and VREE…ADFG. The span at 297–314 shows a compositional bias: basic and acidic residues; that stretch reads NDPKMSETERQSMESERA. Phosphoserine is present on residues Ser-335 and Ser-336.

This sequence belongs to the KCMF1 family. Component of the SIFI complex, composed of KCMF1, UBR4 and calmodulin (CALM1, CALM2 or CALM3).

It localises to the cytoplasm. The protein localises to the late endosome. The protein resides in the lysosome. It catalyses the reaction S-ubiquitinyl-[E2 ubiquitin-conjugating enzyme]-L-cysteine + [acceptor protein]-L-lysine = [E2 ubiquitin-conjugating enzyme]-L-cysteine + N(6)-ubiquitinyl-[acceptor protein]-L-lysine.. The protein operates within protein modification; protein ubiquitination. Functionally, E3 ubiquitin-protein ligase which accepts ubiquitin from an E2 ubiquitin-conjugating enzyme and then transfers it to targeted substrates, promoting their degradation by the proteasome. Together with UBR4, component of the N-end rule pathway: ubiquitinates proteins bearing specific N-terminal residues that are destabilizing according to the N-end rule, leading to their degradation. Does not ubiquitinate proteins that are acetylated at the N-terminus. Together with UBR4, part of a protein quality control pathway that catalyzes ubiquitination and degradation of proteins that have been oxidized in response to reactive oxygen species (ROS): recognizes proteins with an Arg-CysO3(H) degron at the N-terminus, and mediates assembly of heterotypic 'Lys-63'-/'Lys-27'-linked branched ubiquitin chains on oxidized proteins, leading to their degradation by autophagy. Catalytic component of the SIFI complex, a multiprotein complex required to inhibit the mitochondrial stress response after a specific stress event has been resolved: ubiquitinates and degrades (1) components of the HRI-mediated signaling of the integrated stress response, such as DELE1 and EIF2AK1/HRI, as well as (2) unimported mitochondrial precursors. Within the SIFI complex, UBR4 initiates ubiquitin chain that are further elongated or branched by KCMF1. The polypeptide is E3 ubiquitin-protein ligase KCMF1 (KCMF1) (Bos taurus (Bovine)).